The sequence spans 176 residues: Large ribosomal subunit protein uL6 (176 aa).

It belongs to the universal ribosomal protein uL6 family. In terms of assembly, part of the 50S ribosomal subunit.

This protein binds to the 23S rRNA, and is important in its secondary structure. It is located near the subunit interface in the base of the L7/L12 stalk, and near the tRNA binding site of the peptidyltransferase center. This is Large ribosomal subunit protein uL6 from Lactobacillus gasseri (strain ATCC 33323 / DSM 20243 / BCRC 14619 / CIP 102991 / JCM 1131 / KCTC 3163 / NCIMB 11718 / NCTC 13722 / AM63).